The chain runs to 197 residues: Pyridoxal 5'-phosphate synthase subunit PdxT (197 aa).

L-glutamine is bound at residue 52 to 54 (GES). Cys-84 (nucleophile) is an active-site residue. Residues Arg-111 and 139–140 (IR) contribute to the L-glutamine site. Catalysis depends on charge relay system residues His-175 and Glu-177.

Belongs to the glutaminase PdxT/SNO family. In terms of assembly, in the presence of PdxS, forms a dodecamer of heterodimers. Only shows activity in the heterodimer.

The catalysed reaction is aldehydo-D-ribose 5-phosphate + D-glyceraldehyde 3-phosphate + L-glutamine = pyridoxal 5'-phosphate + L-glutamate + phosphate + 3 H2O + H(+). It carries out the reaction L-glutamine + H2O = L-glutamate + NH4(+). It functions in the pathway cofactor biosynthesis; pyridoxal 5'-phosphate biosynthesis. Its function is as follows. Catalyzes the hydrolysis of glutamine to glutamate and ammonia as part of the biosynthesis of pyridoxal 5'-phosphate. The resulting ammonia molecule is channeled to the active site of PdxS. The protein is Pyridoxal 5'-phosphate synthase subunit PdxT of Halorubrum lacusprofundi (strain ATCC 49239 / DSM 5036 / JCM 8891 / ACAM 34).